The sequence spans 944 residues: 2-oxoglutarate dehydrogenase E1 component (944 aa).

Residues 914-944 are disordered; sequence RRRRSSPAEGDPTVHKKEQERIVSDSLTRKN. Over residues 925-936 the composition is skewed to basic and acidic residues; that stretch reads PTVHKKEQERIV.

This sequence belongs to the alpha-ketoglutarate dehydrogenase family. As to quaternary structure, homodimer. Part of the 2-oxoglutarate dehydrogenase (OGDH) complex composed of E1 (2-oxoglutarate dehydrogenase), E2 (dihydrolipoamide succinyltransferase) and E3 (dihydrolipoamide dehydrogenase); the complex contains multiple copies of the three enzymatic components (E1, E2 and E3). Thiamine diphosphate is required as a cofactor.

The enzyme catalyses N(6)-[(R)-lipoyl]-L-lysyl-[protein] + 2-oxoglutarate + H(+) = N(6)-[(R)-S(8)-succinyldihydrolipoyl]-L-lysyl-[protein] + CO2. In terms of biological role, E1 component of the 2-oxoglutarate dehydrogenase (OGDH) complex which catalyzes the decarboxylation of 2-oxoglutarate, the first step in the conversion of 2-oxoglutarate to succinyl-CoA and CO(2). The sequence is that of 2-oxoglutarate dehydrogenase E1 component from Bacillus licheniformis (strain ATCC 14580 / DSM 13 / JCM 2505 / CCUG 7422 / NBRC 12200 / NCIMB 9375 / NCTC 10341 / NRRL NRS-1264 / Gibson 46).